The chain runs to 614 residues: UvrABC system protein C (614 aa).

The 79-residue stretch at 25–103 (SVPGVYKMFG…IKSLKPKYNI (79 aa)) folds into the GIY-YIG domain. One can recognise a UVR domain in the interval 214 to 249 (KEIQCELFEMMCRFSNNQDYESAIVCRDRLHALKSM).

This sequence belongs to the UvrC family. Interacts with UvrB in an incision complex.

It is found in the cytoplasm. Its function is as follows. The UvrABC repair system catalyzes the recognition and processing of DNA lesions. UvrC both incises the 5' and 3' sides of the lesion. The N-terminal half is responsible for the 3' incision and the C-terminal half is responsible for the 5' incision. The sequence is that of UvrABC system protein C from Anaplasma phagocytophilum (strain HZ).